Consider the following 323-residue polypeptide: Beta-ketoacyl-[acyl-carrier-protein] synthase III (323 aa).

Catalysis depends on residues C114 and H250. Positions 251-255 (QANRR) are ACP-binding. The active site involves N280.

It belongs to the thiolase-like superfamily. FabH family. As to quaternary structure, homodimer.

The protein localises to the cytoplasm. The catalysed reaction is malonyl-[ACP] + acetyl-CoA + H(+) = 3-oxobutanoyl-[ACP] + CO2 + CoA. The protein operates within lipid metabolism; fatty acid biosynthesis. In terms of biological role, catalyzes the condensation reaction of fatty acid synthesis by the addition to an acyl acceptor of two carbons from malonyl-ACP. Catalyzes the first condensation reaction which initiates fatty acid synthesis and may therefore play a role in governing the total rate of fatty acid production. Possesses both acetoacetyl-ACP synthase and acetyl transacylase activities. Its substrate specificity determines the biosynthesis of branched-chain and/or straight-chain of fatty acids. This is Beta-ketoacyl-[acyl-carrier-protein] synthase III from Rhodospirillum centenum (strain ATCC 51521 / SW).